Here is a 181-residue protein sequence, read N- to C-terminus: Probable pyruvoyl-dependent arginine decarboxylase (181 aa).

Ser43 carries the pyruvic acid (Ser) modification.

The protein belongs to the PdaD family. Requires pyruvate as cofactor.

It carries out the reaction L-arginine + H(+) = agmatine + CO2. The chain is Probable pyruvoyl-dependent arginine decarboxylase from Prosthecochloris aestuarii (strain DSM 271 / SK 413).